We begin with the raw amino-acid sequence, 424 residues long: Histidine--tRNA ligase (424 aa).

It belongs to the class-II aminoacyl-tRNA synthetase family. Homodimer.

The protein resides in the cytoplasm. The catalysed reaction is tRNA(His) + L-histidine + ATP = L-histidyl-tRNA(His) + AMP + diphosphate + H(+). This Francisella philomiragia subsp. philomiragia (strain ATCC 25017 / CCUG 19701 / FSC 153 / O#319-036) protein is Histidine--tRNA ligase.